A 238-amino-acid polypeptide reads, in one-letter code: Ribonuclease PH (238 aa).

Phosphate is bound by residues Arg86 and 124-126; that span reads GTR.

This sequence belongs to the RNase PH family. Homohexameric ring arranged as a trimer of dimers.

The enzyme catalyses tRNA(n+1) + phosphate = tRNA(n) + a ribonucleoside 5'-diphosphate. In terms of biological role, phosphorolytic 3'-5' exoribonuclease that plays an important role in tRNA 3'-end maturation. Removes nucleotide residues following the 3'-CCA terminus of tRNAs; can also add nucleotides to the ends of RNA molecules by using nucleoside diphosphates as substrates, but this may not be physiologically important. Probably plays a role in initiation of 16S rRNA degradation (leading to ribosome degradation) during starvation. This Haemophilus influenzae (strain PittGG) protein is Ribonuclease PH.